A 173-amino-acid polypeptide reads, in one-letter code: Translocon-associated protein subunit delta (173 aa).

Residues 1–23 (MAAMASLGALALLLLSSLSRCSA) form the signal peptide. Residues 24–144 (EACLEPQITP…SVDHRGTWNG (121 aa)) lie on the Lumenal side of the membrane. Cys-26 and Cys-57 are joined by a disulfide. Lys-73 is covalently cross-linked (Glycyl lysine isopeptide (Lys-Gly) (interchain with G-Cter in ubiquitin)). A helical transmembrane segment spans residues 145 to 165 (PWVSTEVLAAAIGLVIYYLAF). Topologically, residues 166-173 (SAKSHIQA) are cytoplasmic.

The protein belongs to the TRAP-delta family. As to quaternary structure, heterotetramer of TRAP-alpha, TRAP-beta, TRAP-delta and TRAP-gamma.

The protein localises to the endoplasmic reticulum membrane. Its function is as follows. TRAP proteins are part of a complex whose function is to bind calcium to the ER membrane and thereby regulate the retention of ER resident proteins. The chain is Translocon-associated protein subunit delta (SSR4) from Homo sapiens (Human).